The sequence spans 199 residues: Guanylyl cyclase-activating protein 1 (199 aa).

Gly2 is lipidated: N-myristoyl glycine. A Deamidated asparagine modification is found at Asn3. EF-hand domains follow at residues 13–48, 50–85, 86–121, and 129–164; these read SATE…KNLS, SANK…VLKG, KVDQ…IRAI, and TAEE…DEVL. Positions 63, 65, 67, 69, 74, 99, 101, 103, 105, 110, 142, 144, 146, 148, and 153 each coordinate Ca(2+).

Retina, in rod and cone outer segments, and pineal gland.

Its function is as follows. Stimulates retinal guanylyl cyclase when free calcium ions concentration is low and inhibits guanylyl cyclase when free calcium ions concentration is elevated. This Ca(2+)-sensitive regulation of retinal guanylyl cyclase is a key event in recovery of the dark state of rod photoreceptors following light exposure. The protein is Guanylyl cyclase-activating protein 1 (GUCA1A) of Gallus gallus (Chicken).